Reading from the N-terminus, the 277-residue chain is MTETDGFYRSREVLDPAEQYKMDHKRRGTALIFNHERFFWHLALPERRGTNADRDNPTRRFSELGFEVKCFNDLRAEELLLKIHEVSTSSHVDADCFLCVFLSHGEGNHIYAYDAKIEIQTLTGLFKGDKCQSLVGKPKIFIIQACRGSQHDVPLVPLDVVDHQTDKLDDNVTQVDAASVYTLPAGADFLMCYSVAEGYYSHRETVNGSWYIQDLSEMLARHGSSLEFTELLTLVNRKVSQRRVDFCKDPGAIGKKQVPCFASMLTKKLHFCPKPSK.

A propeptide spanning residues 1–5 is cleaved from the precursor; the sequence is MTETD. The tract at residues 25-27 is tri-arginine exosite; that stretch reads KRR. Serine 62 carries the post-translational modification Phosphoserine. Histidine 104 is an active-site residue. The segment at 108–125 is 130's region; that stretch reads NHIYAYDAKIEIQTLTGL. Cysteine 146 is an active-site residue. A propeptide spanning residues 163 to 176 is cleaved from the precursor; sequence HQTDKLDDNVTQVD. At serine 240 the chain carries Phosphoserine. Residues cysteine 247 and cysteine 260 are each lipidated (S-palmitoyl cysteine).

This sequence belongs to the peptidase C14A family. In terms of assembly, heterotetramer that consists of two anti-parallel arranged heterodimers, each one formed by a 18 kDa (p18) and a 11 kDa (p11) subunits. Interacts with BIRC6/bruce. Interacts with RIPK3. Heterotetramer that consists of two anti-parallel arranged heterodimers, each one formed by a 18 kDa (Caspase-6 subunit p18) and a 11 kDa (Caspase-6 subunit p11) subunit. Phosphorylated by NUAK1; phosphorylation inhibits self-activation. Phosphorylation at Ser-240 by AMP-activated protein kinase (PRKAA1 or PRKAA2) inhibits autocleavage, preventing caspase activation, thereby preventing hepatocyte apoptosis. Post-translationally, palmitoylation by ZDHHC17 blocks dimerization and subsequent activation, leading to inhibit the cysteine protease activity. In terms of processing, can be cleaved and activated by different caspases, depending on the context. Cleaved and activated by caspase-8 (CASP8) and subsequently by caspase-3 (CASP3). Can also undergo autoactivation by mediating autocleavage at Asp-162 and Asp-176, while it is not able to cleave its N-terminal disordered prodomain. Cleaved and activated by CASP1, possibly in the context of inflammation.

It localises to the cytoplasm. The protein resides in the nucleus. The enzyme catalyses Strict requirement for Asp at position P1 and has a preferred cleavage sequence of Val-Glu-His-Asp-|-.. During activation, the N-terminal disordered prodomain is removed by cleavage. Concomitantly, double cleavage gives rise to a large 18-kDa and a small 11-kDa subunit. The two large and two small subunits then assemble to form the active CASP6 complex. Can be cleaved and activated by different caspases, depending on the context. Cleaved and activated by caspase-8 (CASP8) and subsequently by caspase-3 (CASP3). Can also undergo autoactivation by mediating autocleavage at Asp-162 and Asp-176, while it is not able to cleave its N-terminal disordered prodomain. Intramolecular cleavage at Asp-176 is a prerequisite for CASP6 self-activation. Cleaved and activated by CASP1 in neurons, possibly in the context of inflammation. Phosphorylation at Ser-240 inhibits autocleavage, preventing caspase activation. In terms of biological role, cysteine protease that plays essential roles in programmed cell death, axonal degeneration, development and innate immunity. Acts as a non-canonical executioner caspase during apoptosis: localizes in the nucleus and cleaves the nuclear structural protein NUMA1 and lamin A/LMNA thereby inducing nuclear shrinkage and fragmentation. Lamin-A/LMNA cleavage is required for chromatin condensation and nuclear disassembly during apoptotic execution. Acts as a regulator of liver damage by promoting hepatocyte apoptosis: in absence of phosphorylation by AMP-activated protein kinase (AMPK), catalyzes cleavage of BID, leading to cytochrome c release, thereby participating in nonalcoholic steatohepatitis. Cleaves PARK7/DJ-1 in cells undergoing apoptosis. Involved in intrinsic apoptosis by mediating cleavage of RIPK1. Furthermore, cleaves many transcription factors such as NF-kappa-B and cAMP response element-binding protein/CREBBP. Cleaves phospholipid scramblase proteins XKR4 and XKR9. In addition to apoptosis, involved in different forms of programmed cell death. Plays an essential role in defense against viruses by acting as a central mediator of the ZBP1-mediated pyroptosis, apoptosis, and necroptosis (PANoptosis), independently of its cysteine protease activity. PANoptosis is a unique inflammatory programmed cell death, which provides a molecular scaffold that allows the interactions and activation of machinery required for inflammasome/pyroptosis, apoptosis and necroptosis. Mechanistically, interacts with RIPK3 and enhances the interaction between RIPK3 and ZBP1, leading to ZBP1-mediated inflammasome activation and cell death. Plays an essential role in axon degeneration during axon pruning which is the remodeling of axons during neurogenesis but not apoptosis. Regulates B-cell programs both during early development and after antigen stimulation. The sequence is that of Caspase-6 from Rattus norvegicus (Rat).